Consider the following 963-residue polypeptide: Unconventional myosin-XIX (963 aa).

The Myosin motor domain occupies H35–A758. G132–T139 is an ATP binding site. The actin-binding stretch occupies residues L602–S624. IQ domains lie at E762 to K782 and Q783 to V812. Positions S829–V963 are myMOMA region.

This sequence belongs to the TRAFAC class myosin-kinesin ATPase superfamily. Myosin family. As to quaternary structure, myosin is a hexamer of 2 heavy chains and 4 light chains: interacts with myosin light chains MYL9 and MYL12B.

It localises to the mitochondrion outer membrane. It is found in the cytoplasm. The protein localises to the cytoskeleton. In terms of biological role, actin-based motor molecule with ATPase activity that localizes to the mitochondrion outer membrane. Motor protein that moves towards the plus-end of actin filaments. Required for mitochondrial inheritance during mitosis. May be involved in mitochondrial transport or positioning. The polypeptide is Unconventional myosin-XIX (Mus musculus (Mouse)).